Consider the following 144-residue polypeptide: MESDREIIHLQHRHSTPGGNQRHINLNHYATKKSVAESMLDVALFMSNAMRLKSVLEQGPFSQYYTTLLTLISASLLLQVVIGILLVVIARLNLNEVENQWRLNQLNNAATTLVFITVVINIFITAFGAHKTGSVAARTSSNPI.

Over 1–62 (MESDREIIHL…KSVLEQGPFS (62 aa)) the chain is Extracellular. Residues 27-39 (NHYATKKSVAESM) form a helix alpha1 region. A helix alpha2 region spans residues 40–59 (LDVALFMSNAMRLKSVLEQG). A helical transmembrane segment spans residues 63–94 (QYYTTLLTLISASLLLQVVIGILLVVIARLNL). Residues 95-98 (NEVE) are Cytoplasmic-facing. The helical transmembrane segment at 99–128 (NQWRLNQLNNAATTLVFITVVINIFITAFG) threads the bilayer. Gln-105 serves as a coordination point for cholesterol. Residues 129–144 (AHKTGSVAARTSSNPI) are Extracellular-facing.

Belongs to the ninjurin family. As to quaternary structure, homooligomer; in response to stimuli, homooligomerizes into filaments. In contrast to NINJ1, the filament is curved toward the intracellular space, preventing its circularization on a relatively flat membrane to mediate plasma membrane rupture: curvature is caused by cholesterol-binding at the cytoplasmic leaflet.

It is found in the cell membrane. Its role in unclear. In contrast to NINJ1 paralog, does not mediate plasma membrane rupture (cytolysis) downstream of necroptotic and pyroptotic programmed cell death. While it is able to oligomerize and form filaments, filaments are curved toward the intracellular space, preventing circularization to mediate plasma membrane rupture. May act as a homophilic transmembrane adhesion molecule involved in nerve regeneration. Promotes axonal growth. The chain is Ninjurin-2 (Ninj2) from Rattus norvegicus (Rat).